We begin with the raw amino-acid sequence, 557 residues long: Formate--tetrahydrofolate ligase (557 aa).

Residue 66–73 (TPAGEGKS) coordinates ATP.

It belongs to the formate--tetrahydrofolate ligase family.

It catalyses the reaction (6S)-5,6,7,8-tetrahydrofolate + formate + ATP = (6R)-10-formyltetrahydrofolate + ADP + phosphate. Its pathway is one-carbon metabolism; tetrahydrofolate interconversion. The polypeptide is Formate--tetrahydrofolate ligase (Lactobacillus johnsonii (strain CNCM I-12250 / La1 / NCC 533)).